We begin with the raw amino-acid sequence, 520 residues long: MENIEKLLMQEKILMLELDLVRAKISLARANGSSQQGDLSLHRETPEKEEAVHSALATFTPSQVKAIPEQTAPGKESTNPLMANILPKDMNSVQTEIRPVKPSDFLRPHQGIPIPPKPEPSSSVAPLRDESGIQHPHTNYYVVYNGPHAGIYDDWGCTKAATNGVPGVAHKKFATITEARAAADAYTTSQQTDRLNFIPKGEAQLKPKSFAKALTSPPKQKAHWLMLGTKKPSSDPAPKEISFAPEITMDDFLYLYDLVRKFDGEGDDTMFTTDNEKISLFNFRKNANPQMVREAYAAGLIKTIYPSNNLQEIKYLPKKVKDAVKRFRTNCIKNTEKDIFLKIRSTIPVWTIQGLLHKPRQVIEIGVSKKVVPTESKAMESKIQIEDLTELAVKTGEQFIQSLLRLNDKKKIFVNMVEHDTLVYSKNIKDTVSEDQRAIETFQQRVISGNLLGFHCPAICHFIVKIVEKEGGSYKCHHCDKGKAIVEDASADSGPKDGPPPTRSIVEKEDVPTTSSKQVD.

Disordered regions lie at residues 103 to 126 (SDFLRPHQGIPIPPKPEPSSSVAP) and 487 to 520 (EDASADSGPKDGPPPTRSIVEKEDVPTTSSKQVD).

Belongs to the caulimoviridae viroplasmin family.

The protein resides in the host cytoplasm. Its function is as follows. Enhances the ribosomal termination-reinitiation event leading to the translation of major open reading frames on the polycistronic viral RNAs. In Arabidopsis thaliana (Mouse-ear cress), this protein is Transactivator/viroplasmin protein.